A 210-amino-acid chain; its full sequence is Acetoin utilization protein AcuA (210 aa).

The 142-residue stretch at 20–161 folds into the N-acetyltransferase domain; it reads LIEGPVSPED…YRKIMEKMMN (142 aa).

The protein belongs to the acetyltransferase family. Monomer.

It participates in ketone degradation; acetoin degradation. Its activity is regulated as follows. Activity is sensitive to salt concentration, a high concentration of KCL (500 mM) is needed for complete inactivation. Functionally, part of the acuABC operon, which is possibly involved in the breakdown of acetoin and butanediol. Acts as an acetyltransferase inactivating acetyl-CoA synthetase AcsA via acetylation at a Lys residue. The polypeptide is Acetoin utilization protein AcuA (acuA) (Bacillus subtilis (strain 168)).